Here is a 382-residue protein sequence, read N- to C-terminus: Galactokinase (382 aa).

34–37 is a binding site for substrate; the sequence is EHTD. Position 124-130 (124-130) interacts with ATP; that stretch reads GAGLSSS. Mg(2+) contacts are provided by Ser130 and Glu162. Asp174 functions as the Proton acceptor in the catalytic mechanism. Substrate is bound at residue Tyr223.

Belongs to the GHMP kinase family. GalK subfamily.

It is found in the cytoplasm. It catalyses the reaction alpha-D-galactose + ATP = alpha-D-galactose 1-phosphate + ADP + H(+). It participates in carbohydrate metabolism; galactose metabolism. Functionally, catalyzes the transfer of the gamma-phosphate of ATP to D-galactose to form alpha-D-galactose-1-phosphate (Gal-1-P). This chain is Galactokinase, found in Enterobacter sp. (strain 638).